The primary structure comprises 148 residues: NPC intracellular cholesterol transporter 2 homolog a (148 aa).

A signal peptide spans 1 to 16; it reads MLRYAVIACAALVVFA. 3 cysteine pairs are disulfide-bonded: C24-C140, C39-C46, and C92-C99. An N-linked (GlcNAc...) asparagine glycan is attached at N51.

Belongs to the NPC2 family. As to expression, broadly expressed with a higher level of expression in many tissues, including midgut, salivary gland and ventral nerve cord.

It localises to the secreted. In terms of biological role, functions redundantly with Npc2b in regulating sterol homeostasis and ecdysteroid biosynthesis, probably by controlling the availability of sterol substrate. The protein is NPC intracellular cholesterol transporter 2 homolog a of Drosophila melanogaster (Fruit fly).